Reading from the N-terminus, the 187-residue chain is Calmodulin-like protein 1 (187 aa).

The residue at position 2 (alanine 2) is an N-acetylalanine. EF-hand domains lie at 8–43 (EQIG…LGQN), 44–79 (PTEA…KLRD), 81–116 (DSEE…IGER), and 117–152 (LTDE…KKRR). 19 residues coordinate Ca(2+): aspartate 21, aspartate 23, aspartate 25, serine 27, glutamate 32, aspartate 57, aspartate 59, asparagine 61, asparagine 63, glutamate 68, aspartate 94, aspartate 96, asparagine 98, glutamate 105, aspartate 130, aspartate 132, aspartate 134, glutamine 136, and glutamate 141. Residues 153-187 (KRIEEKRDHDGGSRTKSAGPSAAPASKRGQKCVIL) are disordered. Basic and acidic residues predominate over residues 154 to 165 (RIEEKRDHDGGS). Positions 169–178 (SAGPSAAPAS) are enriched in low complexity. Cysteine 184 bears the Cysteine methyl ester mark. Cysteine 184 is lipidated: S-farnesyl cysteine. The propeptide at 185-187 (VIL) is removed in mature form.

The protein belongs to the calmodulin family.

The protein resides in the membrane. In terms of biological role, calcium-binding protein that binds and activates CAMK1, a calcium/calmodulin-dependent kinase. The protein is Calmodulin-like protein 1 (CML1) of Oryza sativa subsp. japonica (Rice).